Here is a 360-residue protein sequence, read N- to C-terminus: GDSL esterase/lipase At2g31540 (360 aa).

Positions 1–23 (MSTSKAITLTLFIATTLLAPCNA) are cleaved as a signal peptide. Ser-42 (nucleophile) is an active-site residue. Asn-104 and Asn-326 each carry an N-linked (GlcNAc...) asparagine glycan. Catalysis depends on residues Asp-334 and His-337.

The protein belongs to the 'GDSL' lipolytic enzyme family.

The protein resides in the secreted. The protein is GDSL esterase/lipase At2g31540 of Arabidopsis thaliana (Mouse-ear cress).